The chain runs to 139 residues: Ribulose bisphosphate carboxylase small subunit (139 aa).

This sequence belongs to the RuBisCO small chain family. In terms of assembly, heterohexadecamer of 8 large and 8 small subunits.

It localises to the plastid. The protein resides in the chloroplast. Its function is as follows. RuBisCO catalyzes two reactions: the carboxylation of D-ribulose 1,5-bisphosphate, the primary event in carbon dioxide fixation, as well as the oxidative fragmentation of the pentose substrate in the photorespiration process. Both reactions occur simultaneously and in competition at the same active site. Although the small subunit is not catalytic it is essential for maximal activity. This chain is Ribulose bisphosphate carboxylase small subunit, found in Trieres chinensis (Marine centric diatom).